A 135-amino-acid polypeptide reads, in one-letter code: Auxin-responsive protein SAUR66 (135 aa).

The protein belongs to the ARG7 family.

It is found in the cell membrane. In terms of biological role, may promote auxin-stimulated organ elongation, such as hypocotyls, stamen filaments and petals. In Arabidopsis thaliana (Mouse-ear cress), this protein is Auxin-responsive protein SAUR66.